The chain runs to 147 residues: Small ribosomal subunit protein uS12 (147 aa).

Belongs to the universal ribosomal protein uS12 family. As to quaternary structure, part of the 30S ribosomal subunit.

Its function is as follows. With S4 and S5 plays an important role in translational accuracy. Located at the interface of the 30S and 50S subunits. In Methanococcus vannielii (strain ATCC 35089 / DSM 1224 / JCM 13029 / OCM 148 / SB), this protein is Small ribosomal subunit protein uS12.